We begin with the raw amino-acid sequence, 370 residues long: A-type ATP synthase subunit C (370 aa).

Belongs to the V-ATPase V0D/AC39 subunit family. As to quaternary structure, has multiple subunits with at least A(3), B(3), C, D, E, F, H, I and proteolipid K(x).

It localises to the cell membrane. Component of the A-type ATP synthase that produces ATP from ADP in the presence of a proton gradient across the membrane. This Pyrococcus horikoshii (strain ATCC 700860 / DSM 12428 / JCM 9974 / NBRC 100139 / OT-3) protein is A-type ATP synthase subunit C.